Here is an 89-residue protein sequence, read N- to C-terminus: MKKAAAVLLSLGLVFGFSYGAGHVAEAKTKVKVYKNCKELNKVYKGGVARTSKVKNKGGKTKYKPYVSKALYDANKNKDRDKDLIACER.

The first 27 residues, 1-27 (MKKAAAVLLSLGLVFGFSYGAGHVAEA), serve as a signal peptide directing secretion.

This is an uncharacterized protein from Bacillus subtilis (strain 168).